The primary structure comprises 645 residues: Nucleolar GTP-binding protein 1 (645 aa).

An OBG-type G domain is found at 168-340 (RTLLICGYPN…VRNKACEKLL (173 aa)). Residues 174-181 (GYPNVGKS), 220-224 (DTPGI), and 288-291 (NKTD) each bind GTP. The tract at residues 567–645 (GQNDSMASGS…KRGIGKSDFR (79 aa)) is disordered. Over residues 612–624 (NRDARQGEADRHA) the composition is skewed to basic and acidic residues.

This sequence belongs to the TRAFAC class OBG-HflX-like GTPase superfamily. OBG GTPase family. NOG subfamily.

The protein localises to the nucleus. The protein resides in the nucleolus. Involved in the biogenesis of the 60S ribosomal subunit. The chain is Nucleolar GTP-binding protein 1 (NOG1) from Candida glabrata (strain ATCC 2001 / BCRC 20586 / JCM 3761 / NBRC 0622 / NRRL Y-65 / CBS 138) (Yeast).